A 916-amino-acid chain; its full sequence is Protein translocase subunit SecA (916 aa).

Residues Gln87, Gly105–Thr109, and Asp512 each bind ATP. Positions Gln857–Asp916 are disordered. Zn(2+)-binding residues include Cys900, Cys902, Cys911, and His912. The span at Lys906–Asp916 shows a compositional bias: basic residues.

This sequence belongs to the SecA family. As to quaternary structure, monomer and homodimer. Part of the essential Sec protein translocation apparatus which comprises SecA, SecYEG and auxiliary proteins SecDF-YajC and YidC. It depends on Zn(2+) as a cofactor.

It is found in the cell inner membrane. The protein localises to the cytoplasm. The catalysed reaction is ATP + H2O + cellular proteinSide 1 = ADP + phosphate + cellular proteinSide 2.. Functionally, part of the Sec protein translocase complex. Interacts with the SecYEG preprotein conducting channel. Has a central role in coupling the hydrolysis of ATP to the transfer of proteins into and across the cell membrane, serving both as a receptor for the preprotein-SecB complex and as an ATP-driven molecular motor driving the stepwise translocation of polypeptide chains across the membrane. This chain is Protein translocase subunit SecA, found in Pseudomonas aeruginosa (strain UCBPP-PA14).